The chain runs to 415 residues: Gamma-glutamyl phosphate reductase (415 aa).

The protein belongs to the gamma-glutamyl phosphate reductase family.

It localises to the cytoplasm. The catalysed reaction is L-glutamate 5-semialdehyde + phosphate + NADP(+) = L-glutamyl 5-phosphate + NADPH + H(+). Its pathway is amino-acid biosynthesis; L-proline biosynthesis; L-glutamate 5-semialdehyde from L-glutamate: step 2/2. Its function is as follows. Catalyzes the NADPH-dependent reduction of L-glutamate 5-phosphate into L-glutamate 5-semialdehyde and phosphate. The product spontaneously undergoes cyclization to form 1-pyrroline-5-carboxylate. The sequence is that of Gamma-glutamyl phosphate reductase from Xylella fastidiosa (strain 9a5c).